A 166-amino-acid polypeptide reads, in one-letter code: Regulator of ribonuclease activity A (166 aa).

It belongs to the RraA family. Homotrimer. Binds to both RNA-binding sites in the C-terminal region of Rne and to RhlB.

The protein localises to the cytoplasm. Its function is as follows. Globally modulates RNA abundance by binding to RNase E (Rne) and regulating its endonucleolytic activity. Can modulate Rne action in a substrate-dependent manner by altering the composition of the degradosome. Modulates RNA-binding and helicase activities of the degradosome. This is Regulator of ribonuclease activity A from Mannheimia succiniciproducens (strain KCTC 0769BP / MBEL55E).